The chain runs to 287 residues: Glutamate racemase (287 aa).

Substrate is bound by residues 32-33 (DS) and 64-65 (YG). C96 (proton donor/acceptor) is an active-site residue. 97 to 98 (NT) lines the substrate pocket. C208 acts as the Proton donor/acceptor in catalysis. Residue 209–210 (TH) participates in substrate binding.

Belongs to the aspartate/glutamate racemases family.

The enzyme catalyses L-glutamate = D-glutamate. It functions in the pathway cell wall biogenesis; peptidoglycan biosynthesis. Functionally, provides the (R)-glutamate required for cell wall biosynthesis. This is Glutamate racemase from Yersinia enterocolitica serotype O:8 / biotype 1B (strain NCTC 13174 / 8081).